Here is a 154-residue protein sequence, read N- to C-terminus: Lipoprotein signal peptidase (154 aa).

3 consecutive transmembrane segments (helical) span residues 4–24 (IIIPIITILLIALDQLSKLWI), 62–82 (LFTLITIFVVGVAIIYLMKHI), and 84–104 (GSYWLLISLTLIISGGLGNFI). Residues aspartate 114 and aspartate 130 contribute to the active site. A helical transmembrane segment spans residues 125-145 (IFNVADSYLTIGIICLMIALW).

The protein belongs to the peptidase A8 family.

It is found in the cell membrane. It catalyses the reaction Release of signal peptides from bacterial membrane prolipoproteins. Hydrolyzes -Xaa-Yaa-Zaa-|-(S,diacylglyceryl)Cys-, in which Xaa is hydrophobic (preferably Leu), and Yaa (Ala or Ser) and Zaa (Gly or Ala) have small, neutral side chains.. The protein operates within protein modification; lipoprotein biosynthesis (signal peptide cleavage). Functionally, this protein specifically catalyzes the removal of signal peptides from prolipoproteins. In Streptococcus agalactiae serotype V (strain ATCC BAA-611 / 2603 V/R), this protein is Lipoprotein signal peptidase.